We begin with the raw amino-acid sequence, 103 residues long: Protein IQ-DOMAIN 20 (103 aa).

The segment at 10-22 is calmodulin-binding; that stretch reads VVRRKLLRRSQSR. 2 consecutive IQ domains span residues 36 to 62 and 63 to 87; these read EEIA…LKSL and VKLQ…CMHA.

Belongs to the IQD family. In terms of assembly, interacts with calmodulin (CaM and CML) at the plasma membrane in a calcium ion Ca(2+)- independent manner, however, Ca(2+) seems to modulate calmodulin binding. Binds to multiple calmodulin (CaM) in the presence of Ca(2+) and CaM-like proteins.

The protein resides in the nucleus. It is found in the nucleolus. It localises to the cell membrane. Its function is as follows. May be involved in cooperative interactions with calmodulins or calmodulin-like proteins. Recruits calmodulin proteins to microtubules, thus being a potential scaffold in cellular signaling and trafficking. May associate with nucleic acids and regulate gene expression at the transcriptional or post-transcriptional level. This Arabidopsis thaliana (Mouse-ear cress) protein is Protein IQ-DOMAIN 20.